The following is a 198-amino-acid chain: Patulin synthesis protein F (198 aa).

Residues 1–18 (MRLSTVLLGSLLGALTQA) form the signal peptide. N-linked (GlcNAc...) asparagine glycosylation is found at N128 and N184.

It belongs to the patF family.

Its subcellular location is the cytoplasm. It is found in the cytosol. The enzyme catalyses phyllostine = neopatulin. The protein operates within mycotoxin biosynthesis; patulin biosynthesis. In terms of biological role, part of the gene cluster that mediates the biosynthesis of patulin, an acetate-derived tetraketide mycotoxin produced by several fungal species that shows antimicrobial properties against several bacteria. PatF catalyzes the conversion of phyllostine into neopatulin. The pathway begins with the synthesis of 6-methylsalicylic acid by the polyketide synthase (PKS) patK via condensation of acetate and malonate units. The 6-methylsalicylic acid decarboxylase patG then catalyzes the decarboxylation of 6-methylsalicylic acid to yield m-cresol (also known as 3-methylphenol). These first reactions occur in the cytosol. The intermediate m-cresol is then transported into the endoplasmic reticulum where the cytochrome P450 monooxygenase patH converts it to m-hydroxybenzyl alcohol, which is further converted to gentisyl alcohol by the cytochrome P450 monooxygenase patI. The oxidoreductases patJ and patO further convert gentisyl alcohol to isoepoxydon in the vacuole. PatN catalyzes then the transformation of isoepoxydon into phyllostine. The cluster protein patF is responsible for the conversion from phyllostine to neopatulin whereas the alcohol dehydrogenase patD converts neopatulin to E-ascladiol. The steps between isoepoxydon and E-ascladiol occur in the cytosol, and E-ascladiol is probably secreted to the extracellular space by one of the cluster-specific transporters patC or patM. Finally, the secreted patulin synthase patE catalyzes the conversion of E-ascladiol to patulin. In Aspergillus clavatus (strain ATCC 1007 / CBS 513.65 / DSM 816 / NCTC 3887 / NRRL 1 / QM 1276 / 107), this protein is Patulin synthesis protein F.